Reading from the N-terminus, the 477-residue chain is Histidine--tRNA ligase (477 aa).

Belongs to the class-II aminoacyl-tRNA synthetase family. In terms of assembly, homodimer.

Its subcellular location is the cytoplasm. It catalyses the reaction tRNA(His) + L-histidine + ATP = L-histidyl-tRNA(His) + AMP + diphosphate + H(+). The polypeptide is Histidine--tRNA ligase (Xanthomonas campestris pv. campestris (strain 8004)).